The following is a 281-amino-acid chain: GDT1-like protein 4 (281 aa).

The first 22 residues, 1-22 (MARRVSTTRLLLLLLLVAAAAA), serve as a signal peptide directing secretion. 6 helical membrane passes run 66–86 (AGLG…VSEI), 105–125 (TVLS…TGLG), 137–157 (TNSA…YIAW), 188–208 (IFSR…FLAE), 226–246 (AVGV…FAVV), and 258–278 (GTVA…SYFY).

It belongs to the GDT1 family.

It localises to the membrane. This Oryza sativa subsp. indica (Rice) protein is GDT1-like protein 4.